Consider the following 633-residue polypeptide: RpoH suppressor (633 aa).

In terms of domain architecture, PNPLA spans 11–410 (LVMKGGITSG…SSNFPIHLFD (400 aa)). 3 consecutive transmembrane segments (helical) span residues 38-58 (NIGGTSAGAIAAAACAAAAVG), 133-153 (IAPVETLLLLAALAGLAYAVG), and 159-179 (IAAALPAAICAYLGGVVFAVL). The short motif at 41-45 (GTSAG) is the GXSXG element. Serine 43 serves as the catalytic Nucleophile. Residues 342 to 380 (ARRESLPGSDGENEAEDTTSDEDEQKTVLDSTEALTTGG) are disordered. Acidic residues predominate over residues 352 to 365 (GENEAEDTTSDEDE). The active-site Proton acceptor is the aspartate 397. The short motif at 397–399 (DGG) is the DGA/G element. Residues 605–624 (EGEKWSGEGPDLTKTAPRPL) form a disordered region.

The protein resides in the cell membrane. This protein is non-essential for R.meliloti growth, but induces a heat-shock response in temperature-sensitive E.coli K165 by elevating levels of sigma 32 (mechanism unknown). This is RpoH suppressor (suhR) from Rhizobium meliloti (strain 1021) (Ensifer meliloti).